A 92-amino-acid polypeptide reads, in one-letter code: Small ribosomal subunit protein uS15c (92 aa).

The protein belongs to the universal ribosomal protein uS15 family. In terms of assembly, part of the 30S ribosomal subunit.

Its subcellular location is the plastid. It is found in the chloroplast. The polypeptide is Small ribosomal subunit protein uS15c (rps15-A) (Lemna minor (Common duckweed)).